The following is a 223-amino-acid chain: Ribose-5-phosphate isomerase A (223 aa).

Substrate-binding positions include 32 to 35 (TGST), 85 to 88 (DGAD), and 98 to 101 (KGGG). Residue Glu-107 is the Proton acceptor of the active site. Lys-125 contributes to the substrate binding site.

Belongs to the ribose 5-phosphate isomerase family. As to quaternary structure, homodimer.

The enzyme catalyses aldehydo-D-ribose 5-phosphate = D-ribulose 5-phosphate. It functions in the pathway carbohydrate degradation; pentose phosphate pathway; D-ribose 5-phosphate from D-ribulose 5-phosphate (non-oxidative stage): step 1/1. Its function is as follows. Catalyzes the reversible conversion of ribose-5-phosphate to ribulose 5-phosphate. The polypeptide is Ribose-5-phosphate isomerase A (Pseudomonas savastanoi pv. phaseolicola (strain 1448A / Race 6) (Pseudomonas syringae pv. phaseolicola (strain 1448A / Race 6))).